The chain runs to 187 residues: Pre-mRNA-splicing factor cwf7 (187 aa).

It belongs to the SPF27 family. In terms of assembly, belongs to the 40S cdc5-associated complex (or cwf complex), a spliceosome sub-complex reminiscent of a late-stage spliceosome composed of the U2, U5 and U6 snRNAs and at least brr2, cdc5, cwf2/prp3, cwf3/syf1, cwf4/syf3, cwf5/ecm2, spp42/cwf6, cwf7/spf27, cwf8, cwf9, cwf10, cwf11, cwf12, prp45/cwf13, cwf14, cwf15, cwf16, cwf17, cwf18, cwf19, cwf20, cwf21, cwf22, cwf23, cwf24, cwf25, cwf26, cyp7/cwf27, cwf28, cwf29/ist3, lea1, msl1, prp5/cwf1, prp10, prp12/sap130, prp17, prp22, sap61, sap62, sap114, sap145, slu7, smb1, smd1, smd3, smf1, smg1 and syf2.

It is found in the nucleus. Its function is as follows. Involved in mRNA splicing. This is Pre-mRNA-splicing factor cwf7 (cwf7) from Schizosaccharomyces pombe (strain 972 / ATCC 24843) (Fission yeast).